Consider the following 291-residue polypeptide: Shikimate dehydrogenase (NADP(+)) (291 aa).

Residues 26-28 (SLS) and Ser-73 each bind shikimate. The active-site Proton acceptor is Lys-77. 2 residues coordinate shikimate: Asn-98 and Asp-113. NADP(+)-binding positions include 137–141 (GAGGA) and Val-238. Tyr-240 is a binding site for shikimate. Gly-261 lines the NADP(+) pocket.

Belongs to the shikimate dehydrogenase family. In terms of assembly, homodimer.

The enzyme catalyses shikimate + NADP(+) = 3-dehydroshikimate + NADPH + H(+). It participates in metabolic intermediate biosynthesis; chorismate biosynthesis; chorismate from D-erythrose 4-phosphate and phosphoenolpyruvate: step 4/7. Involved in the biosynthesis of the chorismate, which leads to the biosynthesis of aromatic amino acids. Catalyzes the reversible NADPH linked reduction of 3-dehydroshikimate (DHSA) to yield shikimate (SA). The polypeptide is Shikimate dehydrogenase (NADP(+)) (Listeria innocua serovar 6a (strain ATCC BAA-680 / CLIP 11262)).